The sequence spans 206 residues: LexA repressor (206 aa).

A DNA-binding region (H-T-H motif) is located at residues 27-47 (YEEIRQNLGFRSLNAVFKHLK). Catalysis depends on for autocatalytic cleavage activity residues serine 120 and lysine 157.

The protein belongs to the peptidase S24 family. Homodimer.

It carries out the reaction Hydrolysis of Ala-|-Gly bond in repressor LexA.. Its function is as follows. Represses a number of genes involved in the response to DNA damage (SOS response), including recA and lexA. In the presence of single-stranded DNA, RecA interacts with LexA causing an autocatalytic cleavage which disrupts the DNA-binding part of LexA, leading to derepression of the SOS regulon and eventually DNA repair. This Syntrophobacter fumaroxidans (strain DSM 10017 / MPOB) protein is LexA repressor.